A 91-amino-acid chain; its full sequence is Mercuric transport protein periplasmic component (91 aa).

The N-terminal stretch at 1–19 (MKKLFASLALAAAVAPVWA) is a signal peptide. The HMA domain occupies 22–88 (QTVTLAVPGM…ATADAGYPSS (67 aa)). Cysteine 33 and cysteine 36 together coordinate Hg(2+).

It belongs to the MerP family. As to quaternary structure, monomer.

The protein resides in the periplasm. Involved in mercury resistance. Acts as a mercury scavenger that specifically binds to a mercuric ion in the periplasm and probably passes it to the cytoplasmic mercuric reductase MerA via the mercuric transport protein MerT. This Shigella flexneri protein is Mercuric transport protein periplasmic component.